Here is a 126-residue protein sequence, read N- to C-terminus: Protein ApaG (126 aa).

Positions 2-126 constitute an ApaG domain; the sequence is SDPRYQIDVS…FRLAVPGALH (125 aa).

This Azotobacter vinelandii (strain DJ / ATCC BAA-1303) protein is Protein ApaG.